The following is a 251-amino-acid chain: MVDKSQETTHFGFQTVAKEQKADMVAHVFHSVASKYDVMNDLMSFGIHRLWKRFTIDCSGVRRGQTVLDLAGGTGDLTAKFSRLVGETGKVVLADINESMLKMGREKLRNIGVIGNVEYVQANAEALPFPDNTFDCITISFGLRNVTDKDKALRSMYRVLKPGGRLLVLEFSKPIIEPLSKAYDAYSFHVLPRIGSLVANDADSYRYLAESIRMHPDQDTLKAMMQDAGFESVDYYNLTAGVVALHRGYKF.

Residues Thr74, Asp95, 123–124, and Ser140 contribute to the S-adenosyl-L-methionine site; that span reads NA.

Belongs to the class I-like SAM-binding methyltransferase superfamily. MenG/UbiE family.

The enzyme catalyses a 2-demethylmenaquinol + S-adenosyl-L-methionine = a menaquinol + S-adenosyl-L-homocysteine + H(+). It catalyses the reaction a 2-methoxy-6-(all-trans-polyprenyl)benzene-1,4-diol + S-adenosyl-L-methionine = a 5-methoxy-2-methyl-3-(all-trans-polyprenyl)benzene-1,4-diol + S-adenosyl-L-homocysteine + H(+). The protein operates within quinol/quinone metabolism; menaquinone biosynthesis; menaquinol from 1,4-dihydroxy-2-naphthoate: step 2/2. It functions in the pathway cofactor biosynthesis; ubiquinone biosynthesis. Its function is as follows. Methyltransferase required for the conversion of demethylmenaquinol (DMKH2) to menaquinol (MKH2) and the conversion of 2-polyprenyl-6-methoxy-1,4-benzoquinol (DDMQH2) to 2-polyprenyl-3-methyl-6-methoxy-1,4-benzoquinol (DMQH2). This Escherichia coli O9:H4 (strain HS) protein is Ubiquinone/menaquinone biosynthesis C-methyltransferase UbiE.